The chain runs to 426 residues: Enolase (426 aa).

Gln163 is a binding site for (2R)-2-phosphoglycerate. Residue Glu205 is the Proton donor of the active site. Residues Asp242, Glu283, and Asp310 each coordinate Mg(2+). Residues Lys335, Arg364, Ser365, and Lys386 each contribute to the (2R)-2-phosphoglycerate site. Lys335 acts as the Proton acceptor in catalysis.

This sequence belongs to the enolase family. The cofactor is Mg(2+).

It is found in the cytoplasm. Its subcellular location is the secreted. It localises to the cell surface. The enzyme catalyses (2R)-2-phosphoglycerate = phosphoenolpyruvate + H2O. Its pathway is carbohydrate degradation; glycolysis; pyruvate from D-glyceraldehyde 3-phosphate: step 4/5. Its function is as follows. Catalyzes the reversible conversion of 2-phosphoglycerate (2-PG) into phosphoenolpyruvate (PEP). It is essential for the degradation of carbohydrates via glycolysis. The protein is Enolase of Cutibacterium acnes (strain DSM 16379 / KPA171202) (Propionibacterium acnes).